The sequence spans 187 residues: Large ribosomal subunit protein uL5 (187 aa).

The protein belongs to the universal ribosomal protein uL5 family. As to quaternary structure, part of the 50S ribosomal subunit; part of the 5S rRNA/L5/L18/L25 subcomplex. Contacts the 5S rRNA and the P site tRNA. Forms a bridge to the 30S subunit in the 70S ribosome.

This is one of the proteins that bind and probably mediate the attachment of the 5S RNA into the large ribosomal subunit, where it forms part of the central protuberance. In the 70S ribosome it contacts protein S13 of the 30S subunit (bridge B1b), connecting the 2 subunits; this bridge is implicated in subunit movement. Contacts the P site tRNA; the 5S rRNA and some of its associated proteins might help stabilize positioning of ribosome-bound tRNAs. The chain is Large ribosomal subunit protein uL5 from Mycobacterium sp. (strain JLS).